Here is a 439-residue protein sequence, read N- to C-terminus: Protein translocase subunit SecY (439 aa).

The next 10 membrane-spanning stretches (helical) occupy residues I19–G39, Y68–L88, Y116–M136, L151–I171, F176–I196, W216–V236, V269–L289, W312–V332, V373–G393, and K396–V416.

It belongs to the SecY/SEC61-alpha family. Component of the Sec protein translocase complex. Heterotrimer consisting of SecY, SecE and SecG subunits. The heterotrimers can form oligomers, although 1 heterotrimer is thought to be able to translocate proteins. Interacts with the ribosome. Interacts with SecDF, and other proteins may be involved. Interacts with SecA.

It is found in the cell membrane. Functionally, the central subunit of the protein translocation channel SecYEG. Consists of two halves formed by TMs 1-5 and 6-10. These two domains form a lateral gate at the front which open onto the bilayer between TMs 2 and 7, and are clamped together by SecE at the back. The channel is closed by both a pore ring composed of hydrophobic SecY resides and a short helix (helix 2A) on the extracellular side of the membrane which forms a plug. The plug probably moves laterally to allow the channel to open. The ring and the pore may move independently. The protein is Protein translocase subunit SecY of Lactococcus lactis subsp. cremoris (Streptococcus cremoris).